The sequence spans 114 residues: uncharacterized protein (114 aa).

A disordered region spans residues 1–37; the sequence is MLKKILSLFKKEEPKTEEKPTEVEEKKEEREEKEEKK. The segment covering 9–37 has biased composition (basic and acidic residues); the sequence is FKKEEPKTEEKPTEVEEKKEEREEKEEKK.

This is an uncharacterized protein from Aquifex aeolicus (strain VF5).